The following is a 171-amino-acid chain: Large ribosomal subunit protein uL10 (171 aa).

This sequence belongs to the universal ribosomal protein uL10 family. Part of the ribosomal stalk of the 50S ribosomal subunit. The N-terminus interacts with L11 and the large rRNA to form the base of the stalk. The C-terminus forms an elongated spine to which L12 dimers bind in a sequential fashion forming a multimeric L10(L12)X complex.

In terms of biological role, forms part of the ribosomal stalk, playing a central role in the interaction of the ribosome with GTP-bound translation factors. This Corynebacterium efficiens (strain DSM 44549 / YS-314 / AJ 12310 / JCM 11189 / NBRC 100395) protein is Large ribosomal subunit protein uL10.